The primary structure comprises 353 residues: Histidinol-phosphate aminotransferase (353 aa).

The residue at position 211 (Lys-211) is an N6-(pyridoxal phosphate)lysine.

It belongs to the class-II pyridoxal-phosphate-dependent aminotransferase family. Histidinol-phosphate aminotransferase subfamily. Homodimer. It depends on pyridoxal 5'-phosphate as a cofactor.

It carries out the reaction L-histidinol phosphate + 2-oxoglutarate = 3-(imidazol-4-yl)-2-oxopropyl phosphate + L-glutamate. It participates in amino-acid biosynthesis; L-histidine biosynthesis; L-histidine from 5-phospho-alpha-D-ribose 1-diphosphate: step 7/9. The polypeptide is Histidinol-phosphate aminotransferase (Marinomonas sp. (strain MWYL1)).